We begin with the raw amino-acid sequence, 480 residues long: Gasdermin-C3 (480 aa).

The interval methionine 1–lysine 226 is triggers pyroptosis.

The protein belongs to the gasdermin family. As to quaternary structure, homooligomer; homooligomeric ring-shaped pore complex containing 27-28 subunits when inserted in the membrane. In terms of processing, cleavage by CASP8 relieves autoinhibition by releasing the N-terminal moiety (Gasdermin-C3, N-terminal) that initiates pyroptosis. Palmitoylated.

It is found in the cytoplasm. The protein localises to the cytosol. It localises to the cell membrane. Its activity is regulated as follows. The full-length protein before cleavage is inactive: intramolecular interactions between N- and C-terminal domains mediate autoinhibition in the absence of activation signal. The intrinsic pyroptosis-inducing activity is carried by the released N-terminal moiety (Gasdermin-C3, N-terminal) following cleavage by caspase CASP8. Functionally, this form constitutes the precursor of the pore-forming protein: upon cleavage, the released N-terminal moiety (Gasdermin-C3, N-terminal) binds to membranes and forms pores, triggering pyroptosis. Pore-forming protein that causes membrane permeabilization and pyroptosis. Produced by the cleavage of gasdermin-C3 by caspase CASP8 in response to death signals. After cleavage, moves to the plasma membrane where it strongly binds to membrane inner leaflet lipids. Homooligomerizes within the membrane and forms pores of 10-15 nanometers (nm) of inner diameter, triggering pyroptosis. In Mus musculus (Mouse), this protein is Gasdermin-C3.